We begin with the raw amino-acid sequence, 131 residues long: Classical arabinogalactan protein 2 (131 aa).

The signal sequence occupies residues 1–21; that stretch reads MNSKAMQALIFLGFLATSCLA. A Pyrrolidone carboxylic acid modification is found at Gln22. A 4-hydroxyproline mark is found at Pro24, Pro26, Pro28, Pro34, and Pro35. 5 O-linked (Ara...) hydroxyproline glycosylation sites follow: Pro24, Pro26, Pro28, Pro34, and Pro35. A disordered region spans residues 24–106; it reads PAPAPTTVTP…PGPDGAADAP (83 aa). Composition is skewed to pro residues over residues 25–38 and 49–64; these read APAP…PTAL and IASP…PAPT. Low complexity-rich tracts occupy residues 65–76 and 90–106; these read TSPTTSPVASPP and TPTS…ADAP. Residue Ser107 is the site of GPI-anchor amidated serine attachment. The propeptide at 108–131 is removed in mature form; the sequence is AAWANKAFLVGTAVAGALYAVVLA.

It belongs to the classical AGP family. O-glycosylated on hydroxyprolines; noncontiguous hydroxylproline residues are glycosylated with arabinogalactan.

Its subcellular location is the cell membrane. In terms of biological role, proteoglycan that seems to be implicated in diverse developmental roles such as differentiation, cell-cell recognition, embryogenesis and programmed cell death. This Arabidopsis thaliana (Mouse-ear cress) protein is Classical arabinogalactan protein 2 (AGP2).